A 261-amino-acid chain; its full sequence is Pantothenate synthetase (261 aa).

ATP is bound at residue 29 to 36 (MGALHNGH). His36 acts as the Proton donor in catalysis. A (R)-pantoate-binding site is contributed by Gln60. Gln60 is a beta-alanine binding site. 147–150 (GEKD) contacts ATP. Gln153 is a binding site for (R)-pantoate. Position 184–187 (184–187 (LSSR)) interacts with ATP.

The protein belongs to the pantothenate synthetase family. In terms of assembly, homodimer.

Its subcellular location is the cytoplasm. The catalysed reaction is (R)-pantoate + beta-alanine + ATP = (R)-pantothenate + AMP + diphosphate + H(+). It functions in the pathway cofactor biosynthesis; (R)-pantothenate biosynthesis; (R)-pantothenate from (R)-pantoate and beta-alanine: step 1/1. In terms of biological role, catalyzes the condensation of pantoate with beta-alanine in an ATP-dependent reaction via a pantoyl-adenylate intermediate. The polypeptide is Pantothenate synthetase (Francisella tularensis subsp. holarctica (strain FTNF002-00 / FTA)).